The primary structure comprises 403 residues: Riboflavin biosynthesis protein RibBA (403 aa).

Residues 1 to 204 (MKNKVFASIG…IGELVNYRRR (204 aa)) are DHBP synthase. Residues 30–31 (RE), aspartate 35, 143–147 (RTGHT), and glutamate 167 each bind D-ribulose 5-phosphate. Residue glutamate 31 participates in Mg(2+) binding. A Mg(2+)-binding site is contributed by histidine 146. Residues 205–403 (TEKFISEIVN…EKMGHMLKKV (199 aa)) form a GTP cyclohydrolase II region. GTP is bound at residue 255–259 (RVHSS). 3 residues coordinate Zn(2+): cysteine 260, cysteine 271, and cysteine 273. Residues glutamine 276, 298 to 300 (EGR), and threonine 320 each bind GTP. Aspartate 332 (proton acceptor; for GTP cyclohydrolase activity) is an active-site residue. The active-site Nucleophile; for GTP cyclohydrolase activity is arginine 334. The GTP site is built by threonine 355 and lysine 360.

In the N-terminal section; belongs to the DHBP synthase family. This sequence in the C-terminal section; belongs to the GTP cyclohydrolase II family. Requires Mg(2+) as cofactor. Mn(2+) serves as cofactor. Zn(2+) is required as a cofactor.

The enzyme catalyses D-ribulose 5-phosphate = (2S)-2-hydroxy-3-oxobutyl phosphate + formate + H(+). The catalysed reaction is GTP + 4 H2O = 2,5-diamino-6-hydroxy-4-(5-phosphoribosylamino)-pyrimidine + formate + 2 phosphate + 3 H(+). The protein operates within cofactor biosynthesis; riboflavin biosynthesis; 2-hydroxy-3-oxobutyl phosphate from D-ribulose 5-phosphate: step 1/1. It participates in cofactor biosynthesis; riboflavin biosynthesis; 5-amino-6-(D-ribitylamino)uracil from GTP: step 1/4. Its function is as follows. Catalyzes the conversion of D-ribulose 5-phosphate to formate and 3,4-dihydroxy-2-butanone 4-phosphate. Functionally, catalyzes the conversion of GTP to 2,5-diamino-6-ribosylamino-4(3H)-pyrimidinone 5'-phosphate (DARP), formate and pyrophosphate. The polypeptide is Riboflavin biosynthesis protein RibBA (Endomicrobium trichonymphae).